The primary structure comprises 152 residues: Endoribonuclease YbeY (152 aa).

Zn(2+) contacts are provided by histidine 113, histidine 117, and histidine 123.

This sequence belongs to the endoribonuclease YbeY family. It depends on Zn(2+) as a cofactor.

Its subcellular location is the cytoplasm. Functionally, single strand-specific metallo-endoribonuclease involved in late-stage 70S ribosome quality control and in maturation of the 3' terminus of the 16S rRNA. This chain is Endoribonuclease YbeY, found in Paracidovorax citrulli (strain AAC00-1) (Acidovorax citrulli).